The chain runs to 273 residues: Dermonecrotic toxin LhSicTox-alphaIA2ai (273 aa).

The active site involves His5. Mg(2+) contacts are provided by Glu25 and Asp27. The active-site Nucleophile is the His41. Disulfide bonds link Cys45-Cys51 and Cys47-Cys190. Asp85 provides a ligand contact to Mg(2+).

This sequence belongs to the arthropod phospholipase D family. Class II subfamily. Requires Mg(2+) as cofactor. As to expression, expressed by the venom gland.

Its subcellular location is the secreted. It carries out the reaction an N-(acyl)-sphingosylphosphocholine = an N-(acyl)-sphingosyl-1,3-cyclic phosphate + choline. It catalyses the reaction an N-(acyl)-sphingosylphosphoethanolamine = an N-(acyl)-sphingosyl-1,3-cyclic phosphate + ethanolamine. The catalysed reaction is a 1-acyl-sn-glycero-3-phosphocholine = a 1-acyl-sn-glycero-2,3-cyclic phosphate + choline. The enzyme catalyses a 1-acyl-sn-glycero-3-phosphoethanolamine = a 1-acyl-sn-glycero-2,3-cyclic phosphate + ethanolamine. In terms of biological role, dermonecrotic toxins cleave the phosphodiester linkage between the phosphate and headgroup of certain phospholipids (sphingolipid and lysolipid substrates), forming an alcohol (often choline) and a cyclic phosphate. This toxin acts on sphingomyelin (SM). It may also act on ceramide phosphoethanolamine (CPE), lysophosphatidylcholine (LPC) and lysophosphatidylethanolamine (LPE), but not on lysophosphatidylserine (LPS), and lysophosphatidylglycerol (LPG). It acts by transphosphatidylation, releasing exclusively cyclic phosphate products as second products. Induces dermonecrosis, hemolysis, increased vascular permeability, edema, inflammatory response, and platelet aggregation. In Loxosceles hirsuta (Recluse spider), this protein is Dermonecrotic toxin LhSicTox-alphaIA2ai.